The sequence spans 571 residues: Phosphoenolpyruvate-protein phosphotransferase (571 aa).

The active-site Tele-phosphohistidine intermediate is the H207. R312 and R348 together coordinate phosphoenolpyruvate. Positions 435 and 459 each coordinate Mg(2+). Phosphoenolpyruvate-binding positions include 458–459 (ND) and R469. C506 functions as the Proton donor in the catalytic mechanism.

This sequence belongs to the PEP-utilizing enzyme family. In terms of assembly, homodimer. Requires Mg(2+) as cofactor.

It localises to the cytoplasm. The enzyme catalyses L-histidyl-[protein] + phosphoenolpyruvate = N(pros)-phospho-L-histidyl-[protein] + pyruvate. In terms of biological role, general (non sugar-specific) component of the phosphoenolpyruvate-dependent sugar phosphotransferase system (sugar PTS). This major carbohydrate active-transport system catalyzes the phosphorylation of incoming sugar substrates concomitantly with their translocation across the cell membrane. Enzyme I transfers the phosphoryl group from phosphoenolpyruvate (PEP) to the phosphoryl carrier protein (HPr). The protein is Phosphoenolpyruvate-protein phosphotransferase (ptsI) of Chlamydia trachomatis serovar D (strain ATCC VR-885 / DSM 19411 / UW-3/Cx).